Here is a 557-residue protein sequence, read N- to C-terminus: Arginine--tRNA ligase (557 aa).

A 'HIGH' region motif is present at residues 128–138; it reads ANPTGPLHVGH.

The protein belongs to the class-I aminoacyl-tRNA synthetase family. As to quaternary structure, monomer.

The protein localises to the cytoplasm. The enzyme catalyses tRNA(Arg) + L-arginine + ATP = L-arginyl-tRNA(Arg) + AMP + diphosphate. In Thiobacillus denitrificans (strain ATCC 25259 / T1), this protein is Arginine--tRNA ligase.